The sequence spans 485 residues: Chromosomal replication initiator protein DnaA (485 aa).

The tract at residues 1-74 is domain I, interacts with DnaA modulators; it reads MEKSKNIWSL…ILTNNGYDNV (74 aa). A domain II region spans residues 74 to 140; the sequence is VTIVFTNQSP…EEEPKNFKNP (67 aa). Residues 141–357 form a domain III, AAA+ region region; the sequence is FLKKRYTFEN…AAVTKLKAYI (217 aa). Residues glycine 185, glycine 187, lysine 188, and threonine 189 each contribute to the ATP site. A domain IV, binds dsDNA region spans residues 358–485; it reads DLDNIEIDID…TELMNKIKKN (128 aa).

The protein belongs to the DnaA family. In terms of assembly, oligomerizes as a right-handed, spiral filament on DNA at oriC.

The protein localises to the cytoplasm. Plays an essential role in the initiation and regulation of chromosomal replication. ATP-DnaA binds to the origin of replication (oriC) to initiate formation of the DNA replication initiation complex once per cell cycle. Binds the DnaA box (a 9 base pair repeat at the origin) and separates the double-stranded (ds)DNA. Forms a right-handed helical filament on oriC DNA; dsDNA binds to the exterior of the filament while single-stranded (ss)DNA is stabiized in the filament's interior. The ATP-DnaA-oriC complex binds and stabilizes one strand of the AT-rich DNA unwinding element (DUE), permitting loading of DNA polymerase. After initiation quickly degrades to an ADP-DnaA complex that is not apt for DNA replication. Binds acidic phospholipids. This is Chromosomal replication initiator protein DnaA from Borreliella afzelii (strain PKo) (Borrelia afzelii).